Consider the following 428-residue polypeptide: Serine--tRNA ligase (428 aa).

An L-serine-binding site is contributed by 231-233 (TAE). Residue 262 to 264 (RSE) coordinates ATP. An L-serine-binding site is contributed by Glu285. 349–352 (EISS) lines the ATP pocket. Position 385 (Ser385) interacts with L-serine.

The protein belongs to the class-II aminoacyl-tRNA synthetase family. Type-1 seryl-tRNA synthetase subfamily. Homodimer. The tRNA molecule binds across the dimer.

It is found in the cytoplasm. The enzyme catalyses tRNA(Ser) + L-serine + ATP = L-seryl-tRNA(Ser) + AMP + diphosphate + H(+). The catalysed reaction is tRNA(Sec) + L-serine + ATP = L-seryl-tRNA(Sec) + AMP + diphosphate + H(+). The protein operates within aminoacyl-tRNA biosynthesis; selenocysteinyl-tRNA(Sec) biosynthesis; L-seryl-tRNA(Sec) from L-serine and tRNA(Sec): step 1/1. Catalyzes the attachment of serine to tRNA(Ser). Is also able to aminoacylate tRNA(Sec) with serine, to form the misacylated tRNA L-seryl-tRNA(Sec), which will be further converted into selenocysteinyl-tRNA(Sec). The protein is Serine--tRNA ligase of Staphylococcus aureus (strain Mu3 / ATCC 700698).